We begin with the raw amino-acid sequence, 373 residues long: Filamin-binding LIM protein 1 (373 aa).

The filamin-binding stretch occupies residues 1-70; it reads MASKPEKRVA…SPWTTPGRAA (70 aa). Disordered regions lie at residues 41–119 and 135–176; these read RPWE…PSEE and QLHL…PVEK. Residues 104–114 show a composition bias toward pro residues; sequence LPPPPPPPPVL. 3 LIM zinc-binding domains span residues 181 to 242, 243 to 300, and 301 to 370; these read DICA…TLER, CGKC…RKFA, and PVCS…RSAA. The FERMT2-binding stretch occupies residues 276-373; sequence IGDESFALGS…HVKRSAAGCC (98 aa).

As to quaternary structure, interacts with NKX2-5. Isoform 1 and isoform 3 interact with FERMT2, FLNA, FLNB and FLNC. Isoform 2 interacts with FLNB. In terms of tissue distribution, isoform 1 and isoform 3 are expressed in heart, kidney, lung, pancreas, placenta and platelets. Isoform 2 is expressed in brain, heart, kidney, lung, pancreas, placenta, skeletal muscle and platelets.

Its subcellular location is the cell junction. It localises to the focal adhesion. The protein resides in the cytoplasm. It is found in the cytoskeleton. The protein localises to the stress fiber. Functionally, serves as an anchoring site for cell-ECM adhesion proteins and filamin-containing actin filaments. Is implicated in cell shape modulation (spreading) and motility. May participate in the regulation of filamin-mediated cross-linking and stabilization of actin filaments. May also regulate the assembly of filamin-containing signaling complexes that control actin assembly. Promotes dissociation of FLNA from ITGB3 and ITGB7. Promotes activation of integrins and regulates integrin-mediated cell-cell adhesion. The polypeptide is Filamin-binding LIM protein 1 (FBLIM1) (Homo sapiens (Human)).